A 533-amino-acid chain; its full sequence is Peptide chain release factor 3 (533 aa).

One can recognise a tr-type G domain in the interval 9 to 284; it reads ARRRTFAIIS…ALCQLSPPPL (276 aa). GTP-binding positions include 18–25, 95–99, and 149–152; these read SHPDAGKT, DTPGH, and NKLD.

The protein belongs to the TRAFAC class translation factor GTPase superfamily. Classic translation factor GTPase family. PrfC subfamily.

The protein localises to the cytoplasm. Functionally, increases the formation of ribosomal termination complexes and stimulates activities of RF-1 and RF-2. It binds guanine nucleotides and has strong preference for UGA stop codons. It may interact directly with the ribosome. The stimulation of RF-1 and RF-2 is significantly reduced by GTP and GDP, but not by GMP. The protein is Peptide chain release factor 3 of Cupriavidus pinatubonensis (strain JMP 134 / LMG 1197) (Cupriavidus necator (strain JMP 134)).